Consider the following 464-residue polypeptide: Fumarate hydratase class II 1 (464 aa).

Substrate is bound by residues 96 to 98 (SGT), 127 to 130 (HPND), 137 to 139 (SSN), and T185. The Proton donor/acceptor role is filled by H186. S316 is a catalytic residue. Residues S317 and 322-324 (KVN) each bind substrate.

The protein belongs to the class-II fumarase/aspartase family. Fumarase subfamily. As to quaternary structure, homotetramer.

It localises to the cytoplasm. It carries out the reaction (S)-malate = fumarate + H2O. It participates in carbohydrate metabolism; tricarboxylic acid cycle; (S)-malate from fumarate: step 1/1. In terms of biological role, involved in the TCA cycle. Catalyzes the stereospecific interconversion of fumarate to L-malate. The chain is Fumarate hydratase class II 1 from Pseudomonas aeruginosa (strain ATCC 15692 / DSM 22644 / CIP 104116 / JCM 14847 / LMG 12228 / 1C / PRS 101 / PAO1).